Consider the following 328-residue polypeptide: Small ribosomal subunit protein bS1A (328 aa).

S1 motif domains follow at residues 31-100, 118-182, and 196-264; these read GDIV…LSIR, DATV…LSHR, and AQVV…LSTK. Residues 298-328 form a disordered region; it reads EAQGIPYEPPTSVDDTDDEEDESLAVSAVDE. The span at 311-328 shows a compositional bias: acidic residues; the sequence is DDTDDEEDESLAVSAVDE.

It belongs to the bacterial ribosomal protein bS1 family.

In terms of biological role, binds mRNA. The protein is Small ribosomal subunit protein bS1A (rps1A) of Synechocystis sp. (strain ATCC 27184 / PCC 6803 / Kazusa).